Consider the following 968-residue polypeptide: Putative pectinesterase/pectinesterase inhibitor 26 (968 aa).

The helical transmembrane segment at 33 to 53 (IGISVAVLVAIIISSTVTIAI) threads the bilayer. Residues 71–230 (LTPAASLKTV…TEFTSNSLAI (160 aa)) are pectinesterase inhibitor 26 A. 10 N-linked (GlcNAc...) asparagine glycosylation sites follow: Asn101, Asn158, Asn219, Asn295, Asn352, Asn400, Asn464, Asn541, Asn559, and Asn603. The pectinesterase inhibitor 26 B stretch occupies residues 265-430 (LTPAASLRNV…RKFTSNSLAI (166 aa)). The segment at 453 to 614 (PTPSSVLRTV…TEFTSNSLAI (162 aa)) is pectinesterase inhibitor 26 C. The interval 660–954 (HVTVAADGSG…FTVKYFLRGD (295 aa)) is pectinesterase 26. Thr735 provides a ligand contact to substrate. Asn737 carries an N-linked (GlcNAc...) asparagine glycan. Gln765 contacts substrate. The Proton donor; for pectinesterase activity role is filled by Asp788. A disulfide bond links Cys802 and Cys822. Residue Asp809 is the Nucleophile; for pectinesterase activity of the active site. A glycan (N-linked (GlcNAc...) asparagine) is linked at Asn863. Positions 872 and 874 each coordinate substrate. A glycan (N-linked (GlcNAc...) asparagine) is linked at Asn900.

The protein in the N-terminal section; belongs to the PMEI family. It in the C-terminal section; belongs to the pectinesterase family. In terms of tissue distribution, expressed in flowers.

The protein localises to the membrane. The catalysed reaction is [(1-&gt;4)-alpha-D-galacturonosyl methyl ester](n) + n H2O = [(1-&gt;4)-alpha-D-galacturonosyl](n) + n methanol + n H(+). The protein operates within glycan metabolism; pectin degradation; 2-dehydro-3-deoxy-D-gluconate from pectin: step 1/5. Acts in the modification of cell walls via demethylesterification of cell wall pectin. The polypeptide is Putative pectinesterase/pectinesterase inhibitor 26 (PME26) (Arabidopsis thaliana (Mouse-ear cress)).